A 121-amino-acid polypeptide reads, in one-letter code: Ribonuclease CL2 (121 aa).

Substrate-binding residues include K6 and R9. Catalysis depends on H11, which acts as the Proton acceptor. Intrachain disulfides connect C26–C81, C42–C92, and C60–C107. Substrate contacts are provided by residues 43-47 (KPSNT) and R82. Residue H114 is the Proton donor of the active site.

Belongs to the pancreatic ribonuclease family.

The protein localises to the secreted. Pyrimidine-specific nuclease with preference for C. This Gallus gallus (Chicken) protein is Ribonuclease CL2.